The following is a 946-amino-acid chain: Bifunctional glutamine synthetase adenylyltransferase/adenylyl-removing enzyme (946 aa).

The segment at 1 to 440 (MKPLSSPLQQ…VFNELIGDDE (440 aa)) is adenylyl removase. An adenylyl transferase region spans residues 449–946 (SEQWRELWQD…ASWQKWLVEE (498 aa)).

The protein belongs to the GlnE family. Requires Mg(2+) as cofactor.

It catalyses the reaction [glutamine synthetase]-O(4)-(5'-adenylyl)-L-tyrosine + phosphate = [glutamine synthetase]-L-tyrosine + ADP. It carries out the reaction [glutamine synthetase]-L-tyrosine + ATP = [glutamine synthetase]-O(4)-(5'-adenylyl)-L-tyrosine + diphosphate. Functionally, involved in the regulation of glutamine synthetase GlnA, a key enzyme in the process to assimilate ammonia. When cellular nitrogen levels are high, the C-terminal adenylyl transferase (AT) inactivates GlnA by covalent transfer of an adenylyl group from ATP to specific tyrosine residue of GlnA, thus reducing its activity. Conversely, when nitrogen levels are low, the N-terminal adenylyl removase (AR) activates GlnA by removing the adenylyl group by phosphorolysis, increasing its activity. The regulatory region of GlnE binds the signal transduction protein PII (GlnB) which indicates the nitrogen status of the cell. This chain is Bifunctional glutamine synthetase adenylyltransferase/adenylyl-removing enzyme, found in Escherichia coli O81 (strain ED1a).